We begin with the raw amino-acid sequence, 321 residues long: tRNA U34 carboxymethyltransferase (321 aa).

Residues Lys-90, Trp-104, Lys-109, Gly-129, 151-153 (DPT), 180-181 (IE), Met-195, Tyr-199, and Arg-314 contribute to the carboxy-S-adenosyl-L-methionine site.

The protein belongs to the class I-like SAM-binding methyltransferase superfamily. CmoB family. As to quaternary structure, homotetramer.

The catalysed reaction is carboxy-S-adenosyl-L-methionine + 5-hydroxyuridine(34) in tRNA = 5-carboxymethoxyuridine(34) in tRNA + S-adenosyl-L-homocysteine + H(+). Catalyzes carboxymethyl transfer from carboxy-S-adenosyl-L-methionine (Cx-SAM) to 5-hydroxyuridine (ho5U) to form 5-carboxymethoxyuridine (cmo5U) at position 34 in tRNAs. This chain is tRNA U34 carboxymethyltransferase, found in Actinobacillus succinogenes (strain ATCC 55618 / DSM 22257 / CCUG 43843 / 130Z).